A 305-amino-acid polypeptide reads, in one-letter code: uncharacterized protein (305 aa).

The disordered stretch occupies residues 255–305; the sequence is RCHRAGLRSPPRTREPLWSLGPSGGEAAGEAPGGKGPPTPVLPHARRAGAA. Residues 276–288 are compositionally biased toward gly residues; it reads PSGGEAAGEAPGG.

This is an uncharacterized protein from Streptomyces fradiae (Streptomyces roseoflavus).